A 219-amino-acid chain; its full sequence is Histone H1.4 (219 aa).

The segment covering 1-15 has biased composition (low complexity); sequence MSETAPAAPAAPAPA. A disordered region spans residues 1–41; the sequence is MSETAPAAPAAPAPAEKTPIKKKARKAAGGAKRKASGPPVS. Ser-2 is modified (N-acetylserine). Ser-2 carries the phosphoserine modification. The residue at position 17 (Lys-17) is an N6-acetyllysine. Thr-18 carries the phosphothreonine modification. Over residues 20-35 the composition is skewed to basic residues; the sequence is IKKKARKAAGGAKRKA. Position 26 is an N6-acetyllysine; alternate (Lys-26). Lys-26 is modified (N6-methyllysine; alternate). At Lys-34 the chain carries N6-(beta-hydroxybutyryl)lysine; alternate. An N6-succinyllysine; alternate modification is found at Lys-34. At Ser-36 the chain carries Phosphoserine. One can recognise an H15 domain in the interval 36–109; the sequence is SGPPVSELIT…GASGSFKLNK (74 aa). The residue at position 52 (Lys-52) is an N6-(beta-hydroxybutyryl)lysine. At Arg-54 the chain carries Citrulline. N6-(beta-hydroxybutyryl)lysine is present on residues Lys-64, Lys-85, Lys-90, and Lys-106. The interval 92 to 219 is disordered; sequence TLVQTKGTGA…KPKKTAAKKK (128 aa). The segment covering 119–140 has biased composition (basic residues); the sequence is KAKKAGAAKAKKPAGAAKKPKK. Position 146 is a phosphothreonine (Thr-146). Basic residues-rich tracts occupy residues 149–160 and 168–185; these read KSTKKTPKKAKK and KKAK…KKAP. Ser-150 carries the post-translational modification ADP-ribosylserine. Ser-187 is subject to Phosphoserine. Residues 192–219 are compositionally biased toward basic residues; sequence RAVKPKAAKPKTSKPKAAKPKKTAAKKK.

Belongs to the histone H1/H5 family. H1 histones are progressively phosphorylated during the cell cycle, becoming maximally phosphorylated during late G2 phase and M phase, and being dephosphorylated sharply thereafter. In terms of processing, acetylated at Lys-26. Deacetylated at Lys-26 by SIRT1. Post-translationally, citrullination at Arg-54 (H1R54ci) by PADI4 takes place within the DNA-binding site of H1 and results in its displacement from chromatin and global chromatin decondensation, thereby promoting pluripotency and stem cell maintenance. ADP-ribosylated on Ser-150 in response to DNA damage.

It localises to the nucleus. Its subcellular location is the chromosome. In terms of biological role, histone H1 protein binds to linker DNA between nucleosomes forming the macromolecular structure known as the chromatin fiber. Histones H1 are necessary for the condensation of nucleosome chains into higher-order structured fibers. Also acts as a regulator of individual gene transcription through chromatin remodeling, nucleosome spacing and DNA methylation. This chain is Histone H1.4, found in Rattus norvegicus (Rat).